Consider the following 407-residue polypeptide: Uronyl 2-sulfotransferase (407 aa).

A disordered region spans residues 1-20; the sequence is MKKKQQQHPGGGTDPWPHGA. Residues 1–49 are Cytoplasmic-facing; that stretch reads MKKKQQQHPGGGTDPWPHGAPVGGAPPCLGSCKRRIPLLPFLRFSLRDY. The helical; Signal-anchor for type II membrane protein transmembrane segment at 50–70 threads the bilayer; sequence GFCMATLLVFCLGSLFYQLSG. Residues 71–407 are Lumenal-facing; it reads GPPRFLLDLR…EKWLEDIYKR (337 aa). 3 N-linked (GlcNAc...) asparagine glycosylation sites follow: N85, N141, and N156. H169 is a catalytic residue. N-linked (GlcNAc...) asparagine glycans are attached at residues N174 and N320. The segment covering 386–400 has biased composition (acidic residues); sequence TEEPIDDEEQDDEKW. Residues 386-407 form a disordered region; sequence TEEPIDDEEQDDEKWLEDIYKR.

The protein belongs to the sulfotransferase 3 family.

It localises to the golgi apparatus membrane. Sulfotransferase that catalyzes the transfer of sulfate to the position 2 of uronyl residues in glycosaminoglycan chains. Has mainly activity toward iduronyl residues in dermatan sulfate, and weaker activity toward glucuronyl residues of chondroitin sulfate. Has no activity toward desulfated N-resulfated heparin. This Mus musculus (Mouse) protein is Uronyl 2-sulfotransferase.